The following is a 103-amino-acid chain: MTGFKVSSFFYILALSRFFNAGRERACDKLKITVTHLYWFIIRKLLLHEVHVHVSRVCNVSFILSPCLFRNFFTLSLHVLYVMYEQALTPEFFRQWWDIIQSK.

A signal peptide spans 1-21 (MTGFKVSSFFYILALSRFFNA).

This is an uncharacterized protein from Saccharomyces cerevisiae (strain ATCC 204508 / S288c) (Baker's yeast).